The sequence spans 490 residues: GDP-fucose protein O-fucosyltransferase 2 (490 aa).

A signal peptide spans 1 to 25 (MRGSWPRLGFPALLLLLHLLTGSDA). Asn-29 and Asn-79 each carry an N-linked (GlcNAc...) asparagine glycan. GDP-beta-L-fucose is bound at residue 81–85 (SEGFN). The active-site Proton acceptor is the Glu-82. Cys-203 and Cys-226 are disulfide-bonded. 336-338 (HLR) is a binding site for GDP-beta-L-fucose. The N-linked (GlcNAc...) asparagine glycan is linked to Asn-368. GDP-beta-L-fucose contacts are provided by residues Asp-418 and 435 to 436 (TF). A disulfide bridge links Cys-459 with Cys-466.

It belongs to the glycosyltransferase 68 family.

It is found in the endoplasmic reticulum. Its subcellular location is the golgi apparatus. It carries out the reaction L-seryl-[protein] + GDP-beta-L-fucose = 3-O-(alpha-L-fucosyl)-L-seryl-[protein] + GDP + H(+). The enzyme catalyses L-threonyl-[protein] + GDP-beta-L-fucose = 3-O-(alpha-L-fucosyl)-L-threonyl-[protein] + GDP + H(+). It functions in the pathway protein modification; protein glycosylation. Does not require divalent metal ions for optimal activity. In terms of biological role, catalyzes the reaction that attaches fucose through an O-glycosidic linkage to a conserved serine or threonine residue in the consensus sequence C1-X-X-S/T-C2 of thrombospondin type I repeats (TSRs) where C1 and C2 are the first and second cysteines of the repeat, respectively. O-fucosylates members of several protein families including the ADAMTS, the thrombospondin (TSP) and spondin families. The sequence is that of GDP-fucose protein O-fucosyltransferase 2 from Drosophila melanogaster (Fruit fly).